The primary structure comprises 105 residues: Replication restart protein PriB (105 aa).

The region spanning 1 to 102 (MTANRLTLSG…LHAEQIELID (102 aa)) is the SSB domain.

It belongs to the PriB family. As to quaternary structure, homodimer. Interacts with PriA and DnaT. Component of the replication restart primosome. Primosome assembly occurs via a 'hand-off' mechanism. PriA binds to replication forks, subsequently PriB then DnaT bind; DnaT then displaces ssDNA to generate the helicase loading substrate.

Its function is as follows. Involved in the restart of stalled replication forks, which reloads the replicative helicase on sites other than the origin of replication; the PriA-PriB pathway is the major replication restart pathway. During primosome assembly it facilitates complex formation between PriA and DnaT on DNA; stabilizes PriA on DNA. Stimulates the DNA unwinding activity of PriA helicase. The polypeptide is Replication restart protein PriB (Erwinia tasmaniensis (strain DSM 17950 / CFBP 7177 / CIP 109463 / NCPPB 4357 / Et1/99)).